Consider the following 176-residue polypeptide: Inner membrane-spanning protein YciB (176 aa).

The next 6 membrane-spanning stretches (helical) occupy residues 3–23 (FLFD…WGIF), 24–44 (TATA…AFRH), 49–69 (TMLW…LVLH), 81–101 (LYWL…NNLI), 121–141 (VAWA…VHNF), and 149–169 (FKLF…SLWL).

The protein belongs to the YciB family.

It is found in the cell inner membrane. Its function is as follows. Plays a role in cell envelope biogenesis, maintenance of cell envelope integrity and membrane homeostasis. This is Inner membrane-spanning protein YciB from Burkholderia lata (strain ATCC 17760 / DSM 23089 / LMG 22485 / NCIMB 9086 / R18194 / 383).